We begin with the raw amino-acid sequence, 439 residues long: S-layer protein (439 aa).

The first 30 residues, 1–30 (MKKNLRIVSAAAAALLAVAPIAATAMPVNA), serve as a signal peptide directing secretion.

Post-translationally, glycosylated.

Its subcellular location is the secreted. The protein resides in the cell wall. It localises to the S-layer. Functionally, the S-layer is a paracrystalline mono-layered assembly of proteins which coat the surface of bacteria. The chain is S-layer protein (slpH) from Lactobacillus helveticus (Lactobacillus suntoryeus).